The chain runs to 212 residues: Ribonuclease HII (212 aa).

An RNase H type-2 domain is found at 20-209 (TCVVGVDEVG…VHNILYQEAS (190 aa)). Residues Asp-26, Glu-27, and Asp-117 each contribute to the a divalent metal cation site.

It belongs to the RNase HII family. Requires Mn(2+) as cofactor. Mg(2+) serves as cofactor.

It localises to the cytoplasm. The catalysed reaction is Endonucleolytic cleavage to 5'-phosphomonoester.. Endonuclease that specifically degrades the RNA of RNA-DNA hybrids. The chain is Ribonuclease HII from Cereibacter sphaeroides (strain ATCC 17029 / ATH 2.4.9) (Rhodobacter sphaeroides).